The chain runs to 461 residues: Probable tubulin polyglutamylase TTLL9 (461 aa).

The segment at 1 to 21 (MSRPKNQNYKGHGLQKGKERE) is disordered. The 381-residue stretch at 22–402 (QRASIRFKTT…EARLTGREKR (381 aa)) folds into the TTL domain. ATP-binding positions include Lys149 and 155-156 (QG). An a protein-binding site is contributed by Gln155. Residues 182-208 (SLEAQPARNTVNPSGSHDTRSSDDQKD) are disordered. The span at 188–197 (ARNTVNPSGS) shows a compositional bias: polar residues. Basic and acidic residues predominate over residues 198 to 208 (HDTRSSDDQKD). ATP is bound by residues 218–221 (QRYI) and 231–233 (KFD). An L-glutamate-binding site is contributed by Arg257. Position 276-277 (276-277 (TN)) interacts with ATP. Lys294 contacts L-glutamate. Residues Asp348, Glu361, and Asn363 each contribute to the Mg(2+) site. Lys379 is an L-glutamate binding site.

It belongs to the tubulin--tyrosine ligase family. Mg(2+) is required as a cofactor.

Its subcellular location is the cytoplasm. The protein localises to the cytoskeleton. It localises to the cilium basal body. The protein resides in the flagellum axoneme. The enzyme catalyses (L-glutamyl)(n)-gamma-L-glutamyl-L-glutamyl-[protein] + L-glutamate + ATP = (L-glutamyl)(n+1)-gamma-L-glutamyl-L-glutamyl-[protein] + ADP + phosphate + H(+). In terms of biological role, probable tubulin polyglutamylase that generates side chains of glutamate on the gamma-carboxyl group of specific glutamate residues within the C-terminal tail of target proteins. Similar to TTLL1, may acquire enzymatic activity only in complex with other proteins as it is most likely lacking domains important for autonomous activity. Mediates tubulin polyglutamylation which induces establishment of microtubule heterogeneity in sperm flagella, thereby playing a role in normal motile flagella axoneme structure and sperm flagella beating pattern. This chain is Probable tubulin polyglutamylase TTLL9 (TTLL9), found in Bos taurus (Bovine).